We begin with the raw amino-acid sequence, 272 residues long: Acetylglutamate kinase (272 aa).

Residues 41-42 (GG), Arg-63, and Asn-166 each bind substrate.

It belongs to the acetylglutamate kinase family. ArgB subfamily.

Its subcellular location is the cytoplasm. The catalysed reaction is N-acetyl-L-glutamate + ATP = N-acetyl-L-glutamyl 5-phosphate + ADP. Its pathway is amino-acid biosynthesis; L-arginine biosynthesis; N(2)-acetyl-L-ornithine from L-glutamate: step 2/4. Catalyzes the ATP-dependent phosphorylation of N-acetyl-L-glutamate. The polypeptide is Acetylglutamate kinase (Anaeromyxobacter sp. (strain K)).